Here is a 258-residue protein sequence, read N- to C-terminus: Type III pantothenate kinase 1 (258 aa).

6 to 13 (DMGNSHIH) provides a ligand contact to ATP. 107–110 (GADR) is a binding site for substrate. The Proton acceptor role is filled by Asp-109. Asp-130 serves as a coordination point for K(+). Thr-133 contributes to the ATP binding site. Residue Thr-185 participates in substrate binding.

Belongs to the type III pantothenate kinase family. Homodimer. NH4(+) is required as a cofactor. It depends on K(+) as a cofactor.

It localises to the cytoplasm. It carries out the reaction (R)-pantothenate + ATP = (R)-4'-phosphopantothenate + ADP + H(+). The protein operates within cofactor biosynthesis; coenzyme A biosynthesis; CoA from (R)-pantothenate: step 1/5. In terms of biological role, catalyzes the phosphorylation of pantothenate (Pan), the first step in CoA biosynthesis. The chain is Type III pantothenate kinase 1 from Francisella tularensis subsp. tularensis (strain FSC 198).